The following is a 307-amino-acid chain: 4-diphosphocytidyl-2-C-methyl-D-erythritol kinase (307 aa).

Lys-9 is an active-site residue. Residue 94-104 coordinates ATP; that stretch reads PIGAGLAGGSS. Asp-136 is an active-site residue.

The protein belongs to the GHMP kinase family. IspE subfamily.

It catalyses the reaction 4-CDP-2-C-methyl-D-erythritol + ATP = 4-CDP-2-C-methyl-D-erythritol 2-phosphate + ADP + H(+). It functions in the pathway isoprenoid biosynthesis; isopentenyl diphosphate biosynthesis via DXP pathway; isopentenyl diphosphate from 1-deoxy-D-xylulose 5-phosphate: step 3/6. In terms of biological role, catalyzes the phosphorylation of the position 2 hydroxy group of 4-diphosphocytidyl-2C-methyl-D-erythritol. The sequence is that of 4-diphosphocytidyl-2-C-methyl-D-erythritol kinase from Synechococcus sp. (strain CC9902).